The chain runs to 26 residues: Alpha-amylase inhibitor 1 (26 aa).

The protein belongs to the protease inhibitor I6 (cereal trypsin/alpha-amylase inhibitor) family.

The protein resides in the secreted. Alpha-amylase inhibitor. This is Alpha-amylase inhibitor 1 from Saussurea costus (Costus).